A 43-amino-acid polypeptide reads, in one-letter code: Potassium channel toxin gamma-KTx 4.9 (43 aa).

Intrachain disulfides connect Cys5-Cys23, Cys11-Cys34, Cys20-Cys39, and Cys24-Cys41.

The protein belongs to the ergtoxin family. Gamma-KTx 4 subfamily. As to expression, expressed by the venom gland.

Its subcellular location is the secreted. In terms of biological role, reversibly blocks Kv11/ERG potassium channels. In Centruroides sculpturatus (Arizona bark scorpion), this protein is Potassium channel toxin gamma-KTx 4.9.